The sequence spans 165 residues: Type 3 secretion system regulator YopR (165 aa).

This sequence belongs to the YopR family.

Its subcellular location is the secreted. May be involved in the regulation of the assembly of the type III secretion system (T3SS), also called injectisome, which is used to inject bacterial effector proteins into eukaryotic host cells. May control the secretion and/or polymerization of YscF/SctF, the principal component of the needle filament, thereby impacting the assembly of the T3SS. Involved in pathogenesis. In Yersinia pestis, this protein is Type 3 secretion system regulator YopR.